The following is a 290-amino-acid chain: Expansin-A26 (290 aa).

An N-terminal signal peptide occupies residues 1 to 29 (MDTTTTMAPLPLLTTTSLLLFFFLASSFA). The tract at residues 45–67 (DGGGDGEGGGGGDGEGGGGGGGA) is disordered. Residues 101–196 (GGACGYKDAD…RKVACVRQGG (96 aa)) enclose the Expansin-like EG45 domain. An Expansin-like CBD domain is found at 206-286 (SYNMVMVKNV…DWTYDNTYQA (81 aa)). N-linked (GlcNAc...) asparagine glycosylation occurs at Asn-250.

Belongs to the expansin family. Expansin A subfamily. As to expression, expressed in flowers.

It localises to the secreted. The protein resides in the cell wall. Its subcellular location is the membrane. Functionally, may cause loosening and extension of plant cell walls by disrupting non-covalent bonding between cellulose microfibrils and matrix glucans. No enzymatic activity has been found. May be required for rapid internodal elongation in deepwater rice during submergence. The sequence is that of Expansin-A26 (EXPA26) from Oryza sativa subsp. japonica (Rice).